Here is a 442-residue protein sequence, read N- to C-terminus: Exodeoxyribonuclease 7 large subunit (442 aa).

It belongs to the XseA family. In terms of assembly, heterooligomer composed of large and small subunits.

It is found in the cytoplasm. It catalyses the reaction Exonucleolytic cleavage in either 5'- to 3'- or 3'- to 5'-direction to yield nucleoside 5'-phosphates.. Bidirectionally degrades single-stranded DNA into large acid-insoluble oligonucleotides, which are then degraded further into small acid-soluble oligonucleotides. This chain is Exodeoxyribonuclease 7 large subunit, found in Rickettsia bellii (strain OSU 85-389).